The following is a 22-amino-acid chain: Peptide PGLa-BM3 (22 aa).

Position 22 is a leucine amide (Leu22).

Expressed by the skin glands.

It localises to the secreted. Its function is as follows. Antimicrobial peptide. This is Peptide PGLa-BM3 from Xenopus boumbaensis (Mawa clawed frog).